The chain runs to 430 residues: Glutamate-1-semialdehyde 2,1-aminomutase (430 aa).

The residue at position 265 (K265) is an N6-(pyridoxal phosphate)lysine.

This sequence belongs to the class-III pyridoxal-phosphate-dependent aminotransferase family. HemL subfamily. As to quaternary structure, homodimer. Requires pyridoxal 5'-phosphate as cofactor.

Its subcellular location is the cytoplasm. It catalyses the reaction (S)-4-amino-5-oxopentanoate = 5-aminolevulinate. It participates in porphyrin-containing compound metabolism; protoporphyrin-IX biosynthesis; 5-aminolevulinate from L-glutamyl-tRNA(Glu): step 2/2. This chain is Glutamate-1-semialdehyde 2,1-aminomutase, found in Helicobacter pylori (strain Shi470).